Here is a 74-residue protein sequence, read N- to C-terminus: Omwaprin-b (74 aa).

The first 24 residues, 1–24 (MSSGGLLLLLGLLTLWEVLTPVSS), serve as a signal peptide directing secretion. The WAP domain maps to 27–71 (RPKKPGLCPPRPQKPCVKECKNDWSCPGQQKCCNYGCIDECRDPI). Intrachain disulfides connect Cys-34–Cys-59, Cys-42–Cys-63, Cys-46–Cys-58, and Cys-52–Cys-67.

This sequence belongs to the venom waprin family. Expressed by the venom gland.

It is found in the secreted. Functionally, damages membranes of susceptible bacteria. Has antibacterial activity against the Gram-positive bacteria B.megaterium and S.warneri. After 45 minutes of treatment with this protein, B.megaterium have no visible pili and are smooth. Has no antibacterial activity against the Gram-positive bacteria B.thuringiensis, S.aureus, S.clavuligerus and B. anthracis, or the Gram-negative bacteria E.coli and A.tumefaciens. Has no hemolytic activity. Does not inhibit the proteinases elastase and cathepsin G. Is not toxic to mice. The polypeptide is Omwaprin-b (Oxyuranus microlepidotus (Inland taipan)).